Reading from the N-terminus, the 108-residue chain is Large ribosomal subunit protein uL24 (108 aa).

The protein belongs to the universal ribosomal protein uL24 family. In terms of assembly, part of the 50S ribosomal subunit.

In terms of biological role, one of two assembly initiator proteins, it binds directly to the 5'-end of the 23S rRNA, where it nucleates assembly of the 50S subunit. Its function is as follows. One of the proteins that surrounds the polypeptide exit tunnel on the outside of the subunit. This Mycoplasma capricolum subsp. capricolum (strain California kid / ATCC 27343 / NCTC 10154) protein is Large ribosomal subunit protein uL24.